The primary structure comprises 377 residues: Chaperone protein DnaJ (377 aa).

The J domain occupies 5 to 70 (DYYQVLGVAK…QKRAAYDQYG (66 aa)). A CR-type zinc finger spans residues 137–215 (GYDTQIRVPS…CHGAGKTKET (79 aa)). The Zn(2+) site is built by Cys150, Cys153, Cys167, Cys170, Cys189, Cys192, Cys203, and Cys206. 4 CXXCXGXG motif repeats span residues 150–157 (CEICHGSG), 167–174 (CPTCNGSG), 189–196 (CPKCHGTG), and 203–210 (CTHCHGAG).

Belongs to the DnaJ family. As to quaternary structure, homodimer. Requires Zn(2+) as cofactor.

Its subcellular location is the cytoplasm. Participates actively in the response to hyperosmotic and heat shock by preventing the aggregation of stress-denatured proteins and by disaggregating proteins, also in an autonomous, DnaK-independent fashion. Unfolded proteins bind initially to DnaJ; upon interaction with the DnaJ-bound protein, DnaK hydrolyzes its bound ATP, resulting in the formation of a stable complex. GrpE releases ADP from DnaK; ATP binding to DnaK triggers the release of the substrate protein, thus completing the reaction cycle. Several rounds of ATP-dependent interactions between DnaJ, DnaK and GrpE are required for fully efficient folding. Also involved, together with DnaK and GrpE, in the DNA replication of plasmids through activation of initiation proteins. The protein is Chaperone protein DnaJ of Paraburkholderia phymatum (strain DSM 17167 / CIP 108236 / LMG 21445 / STM815) (Burkholderia phymatum).